The primary structure comprises 568 residues: Natural resistance-associated macrophage protein 2 (568 aa).

The segment at 1 to 40 (MVLGPEQKMSDDSVSGDHGESASLGNINPAYSNPSLSQSP) is disordered. Residues 1 to 69 (MVLGPEQKMS…EEYSCFSFRK (69 aa)) lie on the Cytoplasmic side of the membrane. A compositionally biased stretch (basic and acidic residues) spans 8 to 20 (KMSDDSVSGDHGE). Residues 23–40 (SLGNINPAYSNPSLSQSP) show a composition bias toward polar residues. The helical transmembrane segment at 70 to 90 (LWAFTGPGFLMSIAYLDPGNI) threads the bilayer. The Extracellular portion of the chain corresponds to 91–96 (ESDLQS). Residues 97–117 (GAVAGFKLLWILLLATLVGLL) traverse the membrane as a helical segment. Topologically, residues 118–154 (LQRLAARLGVVTGLHLAEVCHRQYPKVPRVILWLMVE) are cytoplasmic. Residues 155 to 175 (LAIIGSDMQEVIGSAIAINLL) form a helical membrane-spanning segment. The Extracellular segment spans residues 176–179 (SVGR). The chain crosses the membrane as a helical span at residues 180 to 200 (IPLWGGVLITIADTFVFLFLD). The Cytoplasmic segment spans residues 201–208 (KYGLRKLE). The helical transmembrane segment at 209–229 (AFFGFLITIMALTFGYEYVTV) threads the bilayer. Topologically, residues 230–255 (KPSQSQVLKGMFVPSCSGCRTPQIEQ) are extracellular. Residues 256–276 (AVGIVGAVIMPHNMYLHSALV) traverse the membrane as a helical segment. The Cytoplasmic segment spans residues 277-301 (KSRQVNRNNKQEVREANKYFFIESC). A helical membrane pass occupies residues 302-322 (IALFVSFIINVFVVSVFAEAF). The Extracellular segment spans residues 323 to 360 (FGKTNEQVVEVCTNTSSPHAGLFPKDNSTLAVDIYKGG). N-linked (GlcNAc...) asparagine glycosylation is found at asparagine 336 and asparagine 349. A helical membrane pass occupies residues 361-381 (VVLGCYFGPAALYIWAVGILA). Topologically, residues 382-408 (AGQSSTMTGTYSGQFVMEGFLNLKWSR) are cytoplasmic. A helical transmembrane segment spans residues 409–429 (FARVVLTRSIAIIPTLLVAVF). The Extracellular portion of the chain corresponds to 430–440 (QDVEHLTGMND). Residues 441–461 (FLNVLQSLQLPFALIPILTFT) traverse the membrane as a helical segment. The Cytoplasmic portion of the chain corresponds to 462 to 482 (SLRPVMSDFANGLGWRIAGGI). Residues 483–503 (LVLIICSINMYFVVVYVRDLG) form a helical membrane-spanning segment. Over 504-506 (HVA) the chain is Extracellular. Residues 507-527 (LYVVAAVVSVAYLGFVFYLGW) form a helical membrane-spanning segment. Residues 528–568 (QCLIALGMSFLDCGHTCHLGLTAQPELYLLNTMDADSLVSR) lie on the Cytoplasmic side of the membrane. The interval 555–559 (YLLNT) is required for early endosome targeting. Residues serine 564 and serine 567 each carry the phosphoserine modification.

The protein belongs to the NRAMP family. In terms of assembly, forms a complex with NDFIP1 and NEDD4L, in cortical neurons, in response to iron and cobalt exposure; this interaction leads to SLC11A2 ubiquitination by NEDD4L and proteasome-dependent degradation. Interacts with NDFIP1, NDFIP2 and WWP2; this interaction leads to SLC11A2 ubiquitination by WWP2 and subsequent proteasome-dependent degradation. Interacts with COX2 and TOM6 at the outer mitochondrion membrane. Interacts with ARRDC1; this interaction regulates the incorporation of SLC11A2 into extracellular vesicles through an ubiquitination-dependent mechanism. Interacts with ARRDC4; controls the incorporation of SLC11A2 into extracellular vesicles through an ubiquitination-dependent mechanism. Ubiquitinated by WWP2. In terms of processing, N-glycosylated. Ubiquitously expressed. Expressed in erythroid progenitors.

The protein resides in the early endosome membrane. It localises to the apical cell membrane. The protein localises to the late endosome membrane. It is found in the lysosome membrane. Its subcellular location is the cell membrane. The protein resides in the extracellular vesicle membrane. It localises to the mitochondrion outer membrane. The protein localises to the golgi apparatus. It is found in the trans-Golgi network membrane. Its subcellular location is the recycling endosome membrane. It catalyses the reaction Fe(2+)(in) + H(+)(in) = Fe(2+)(out) + H(+)(out). The catalysed reaction is Co(2+)(out) + H(+)(out) = Co(2+)(in) + H(+)(in). It carries out the reaction Cd(2+)(out) + H(+)(out) = Cd(2+)(in) + H(+)(in). The enzyme catalyses Mn(2+)(in) + H(+)(in) = Mn(2+)(out) + H(+)(out). It catalyses the reaction Zn(2+)(out) + H(+)(out) = Zn(2+)(in) + H(+)(in). The catalysed reaction is Ni(2+)(out) + H(+)(out) = Ni(2+)(in) + H(+)(in). It carries out the reaction H(+)(in) = H(+)(out). The enzyme catalyses Fe(2+)(in) = Fe(2+)(out). In terms of biological role, proton-coupled metal ion symporter operating with a proton to metal ion stoichiometry of 1:1. Selectively transports various divalent metal cations, in decreasing affinity: Cd(2+) &gt; Fe(2+) &gt; Co(2+), Mn(2+) &gt;&gt; Zn(2+), Ni(2+), VO(2+). Essential for maintenance of iron homeostasis by modulating intestinal absorption of dietary Fe(2+) and TF-associated endosomal Fe(2+) transport in erythroid precursors and other cells. Enables Fe(2+) and Mn(2+) ion entry into mitochondria, and is thus expected to promote mitochondrial heme synthesis, iron-sulfur cluster biogenesis and antioxidant defense. Can mediate uncoupled fluxes of either protons or metal ions. The chain is Natural resistance-associated macrophage protein 2 (SLC11A2) from Homo sapiens (Human).